The chain runs to 299 residues: Lysine exporter LysO (299 aa).

The next 8 helical transmembrane spans lie at Met-1–Arg-21, Gln-31–Leu-51, Leu-58–Ala-78, Leu-109–Leu-129, His-131–Leu-151, Ile-169–Leu-189, Ser-207–Phe-227, and Pro-277–Phe-297.

It belongs to the LysO family.

The protein resides in the cell inner membrane. Functionally, mediates export of lysine. The sequence is that of Lysine exporter LysO from Escherichia coli (strain K12).